A 205-amino-acid polypeptide reads, in one-letter code: uncharacterized protein (205 aa).

The stretch at 10–75 forms a coiled coil; the sequence is QDLLSAVDQQ…AANLMTVMTD (66 aa). Residues 111–138 are disordered; that stretch reads PLSNTNNEQTSPPASGKTSETPKKNPTN. Polar residues predominate over residues 112–138; that stretch reads LSNTNNEQTSPPASGKTSETPKKNPTN.

It belongs to the asfivirus K205R family.

The protein localises to the host cytoplasm. Its function is as follows. Induces host endoplasmic reticulum stress and consequently activates autophagy and NF-kappa-B signaling pathway. In turn, may induce autophagy-mediated STING1 degradation and innate immune evasion. This is an uncharacterized protein from Ornithodoros (relapsing fever ticks).